We begin with the raw amino-acid sequence, 467 residues long: uncharacterized protein (467 aa).

Lys290 is subject to N6-(pyridoxal phosphate)lysine.

Belongs to the class-III pyridoxal-phosphate-dependent aminotransferase family. It depends on pyridoxal 5'-phosphate as a cofactor.

This is an uncharacterized protein from Sinorhizobium fredii (strain NBRC 101917 / NGR234).